The following is a 426-amino-acid chain: Enolase (426 aa).

Residue Q163 coordinates (2R)-2-phosphoglycerate. The active-site Proton donor is the E205. Mg(2+)-binding residues include D242, E286, and D313. (2R)-2-phosphoglycerate is bound by residues K338, R367, S368, and K389. Catalysis depends on K338, which acts as the Proton acceptor.

Belongs to the enolase family. Requires Mg(2+) as cofactor.

Its subcellular location is the cytoplasm. The protein localises to the secreted. The protein resides in the cell surface. The enzyme catalyses (2R)-2-phosphoglycerate = phosphoenolpyruvate + H2O. It participates in carbohydrate degradation; glycolysis; pyruvate from D-glyceraldehyde 3-phosphate: step 4/5. Catalyzes the reversible conversion of 2-phosphoglycerate (2-PG) into phosphoenolpyruvate (PEP). It is essential for the degradation of carbohydrates via glycolysis. This chain is Enolase, found in Syntrophobacter fumaroxidans (strain DSM 10017 / MPOB).